A 231-amino-acid chain; its full sequence is Histidine biosynthesis bifunctional protein HisIE (231 aa).

A phosphoribosyl-AMP cyclohydrolase region spans residues 1-130 (MQDVFRQIDW…QKYPIGVYHI (130 aa)). A phosphoribosyl-ATP pyrophosphohydrolase region spans residues 131–231 (LDDLYHIIEQ…GIEEKASRKH (101 aa)).

The protein in the N-terminal section; belongs to the PRA-CH family. This sequence in the C-terminal section; belongs to the PRA-PH family.

It is found in the cytoplasm. The enzyme catalyses 1-(5-phospho-beta-D-ribosyl)-ATP + H2O = 1-(5-phospho-beta-D-ribosyl)-5'-AMP + diphosphate + H(+). It catalyses the reaction 1-(5-phospho-beta-D-ribosyl)-5'-AMP + H2O = 1-(5-phospho-beta-D-ribosyl)-5-[(5-phospho-beta-D-ribosylamino)methylideneamino]imidazole-4-carboxamide. The protein operates within amino-acid biosynthesis; L-histidine biosynthesis; L-histidine from 5-phospho-alpha-D-ribose 1-diphosphate: step 2/9. It functions in the pathway amino-acid biosynthesis; L-histidine biosynthesis; L-histidine from 5-phospho-alpha-D-ribose 1-diphosphate: step 3/9. This Helicobacter hepaticus (strain ATCC 51449 / 3B1) protein is Histidine biosynthesis bifunctional protein HisIE.